The chain runs to 403 residues: MIPLLFILFYFANGIEWHKFETSEEIISTYLLDDVLYTGVNGAVYTFSNNKLNKTGLTNNNYITTSIKVEDADKDTLVCGTNNGNPKCWKIDGSDDPKHRGRGYAPYQNSKVTIISYNECVLSDINISKEGIKRWRRFDGPCGYDLYTADNVIPKDGLRGAFVDKDGTYDKVYILFTDTIGSKRIVKIPYIAQMCLNDEGGPSSLSSHRWSTFLKVELECDIDGRSYRQIIHSRTIKTDNDTILYVFFDSPYSKSALCTYSMNTIKQSFSTSKLEGYTKQLPSPAPGICLPAGKVVSHTTFEVIEKYNVLDDIIKPLSNQPIFEGPSGVKWFDIKEKENEHREYRIYFIKENSIYSFDTKSKQTRSSQVDARLFSVMVTSKPLFIADIGIGVGMPQMKKILKM.

An N-terminal signal peptide occupies residues 1–14 (MIPLLFILFYFANG). The 389-residue stretch at 15–403 (IEWHKFETSE…MPQMKKILKM (389 aa)) folds into the Sema domain.

This sequence belongs to the semaphorin family. As to quaternary structure, interacts with host VESPR.

It is found in the secreted. Functionally, acts as a semaphorin-like protein and binds to host plexin C1 receptor. May alter the movement of host plexin C1-expressing cells including dendritic cells, monocytes, or granulocytes in the proximity of infected cells. May also regulate host cell cytoskeleton of neighboring cells to improve viral infection. The sequence is that of Semaphorin-like protein A39 from Homo sapiens (Human).